A 495-amino-acid polypeptide reads, in one-letter code: UDP-glycosyltransferase 73C10 (495 aa).

The active-site Proton acceptor is the His24. His24 is a binding site for an anthocyanidin. The active-site Charge relay is the Asp129. UDP-alpha-D-glucose is bound by residues Gln358, His373, Trp376, Asn377, Ser378, and Glu381. Gly396 is a binding site for an anthocyanidin. Asp397 and Gln398 together coordinate UDP-alpha-D-glucose.

This sequence belongs to the UDP-glycosyltransferase family.

The catalysed reaction is oleanolate + UDP-alpha-D-glucose = oleanolate 3-O-beta-D-glucoside + UDP + H(+). Its function is as follows. Catalyzes the transfer of a glucose (Glc) moiety from UDP-Glc to the C-3 position of the oleanane sapogenins oleanolate and hederagenin, and to the C-28 carboxylic group of the lupane sapogenin betulinate. The monoglucosylated hederagenin 3-O-beta-D-glucoside is a feeding deterrent of the yellow-striped flea beetle (Phyllotreta nemorum). In Barbarea vulgaris (Yellow rocket), this protein is UDP-glycosyltransferase 73C10.